We begin with the raw amino-acid sequence, 981 residues long: Ephrin type-A receptor 3 (981 aa).

A signal peptide spans 1–20 (MALFRIYSFLAPFHILVLCQ). Over 21 to 545 (ALRNYPDNEV…LAVGDPNQQT (525 aa)) the chain is Extracellular. Residues 29–210 (EVTLLDSMSA…FYKRCPLAVL (182 aa)) form the Eph LBD domain. Fibronectin type-III domains are found at residues 328-441 (PPSA…TSQT) and 442-533 (VSVI…TSHE). 4 N-linked (GlcNAc...) asparagine glycosylation sites follow: asparagine 340, asparagine 410, asparagine 435, and asparagine 485. A helical transmembrane segment spans residues 546–566 (ILAISVAGGAVLLVLLVACFI). The Cytoplasmic segment spans residues 567-981 (VSGRRCGYIK…QAHHGTQVQV (415 aa)). Phosphotyrosine; by autocatalysis occurs at positions 601 and 607. The Protein kinase domain occupies 626 to 887 (IRIERVIGAG…QIVNTLDRLI (262 aa)). ATP-binding positions include 633 to 638 (GAGEFG), lysine 658, and 705 to 711 (EYMENGS). Residue tyrosine 706 is modified to Phosphotyrosine; by autocatalysis. The active-site Proton acceptor is aspartate 751. Residue 755–756 (RN) participates in ATP binding. Phosphotyrosine; by autocatalysis occurs at positions 784 and 927. Residues 910 to 974 (AAVNTVEDWL…LSSIQCLQAH (65 aa)) form the SAM domain. Positions 979-981 (VQV) match the PDZ-binding motif.

The protein belongs to the protein kinase superfamily. Tyr protein kinase family. Ephrin receptor subfamily. As to quaternary structure, heterotetramer upon binding of the ligand. The heterotetramer is composed of an ephrin dimer and a receptor dimer. Oligomerization is probably required to induce biological responses. In terms of processing, autophosphorylates upon activation by efna5. As to expression, widely expressed in the developing zebrafish nervous system.

The protein localises to the cell membrane. It carries out the reaction L-tyrosyl-[protein] + ATP = O-phospho-L-tyrosyl-[protein] + ADP + H(+). Receptor tyrosine kinase which binds promiscuously membrane-bound ephrin family ligands residing on adjacent cells, leading to contact-dependent bidirectional signaling into neighboring cells. The signaling pathway downstream of the receptor is referred to as forward signaling while the signaling pathway downstream of the ephrin ligand is referred to as reverse signaling. Highly promiscuous for ephrin-A ligands it binds preferentially efna5. Upon activation by efna5 regulates cell-cell adhesion, cytoskeletal organization and cell migration. Plays a role in cardiac cells migration and differentiation probably through activation by efna1. Involved in the retinotectal mapping of neurons. May also control the segregation but not the guidance of motor and sensory axons during neuromuscular circuit development. This is Ephrin type-A receptor 3 (epha3) from Danio rerio (Zebrafish).